The primary structure comprises 336 residues: Casein kinase II subunit alpha (336 aa).

Residues 32–317 form the Protein kinase domain; it reads YEVVRKIGRG…AKEAMAHPYF (286 aa). ATP is bound by residues 38-46 and lysine 61; that span reads IGRGKYSEV. Aspartate 149 acts as the Proton acceptor in catalysis.

The protein belongs to the protein kinase superfamily. Ser/Thr protein kinase family. CK2 subfamily. In terms of assembly, tetramer composed of two alpha chains, one beta chain and one beta' chain.

The enzyme catalyses L-seryl-[protein] + ATP = O-phospho-L-seryl-[protein] + ADP + H(+). The catalysed reaction is L-threonyl-[protein] + ATP = O-phospho-L-threonyl-[protein] + ADP + H(+). Its function is as follows. Catalytic subunit of a constitutively active serine/threonine-protein kinase complex that phosphorylates a large number of substrates containing acidic residues C-terminal to the phosphorylated serine or threonine. Phosphorylates the frq clock protein thus regulating the circadian clock. This Neurospora crassa (strain ATCC 24698 / 74-OR23-1A / CBS 708.71 / DSM 1257 / FGSC 987) protein is Casein kinase II subunit alpha (cka).